The primary structure comprises 221 residues: Kinetochore protein Spc25 (221 aa).

The stretch at 63–114 (VIQRREEMEKRVSFMEELAQEVEATKQRNLVMREQIKQQKMLVRQRKNEIME) forms a coiled coil.

It belongs to the SPC25 family. As to quaternary structure, component of the Ndc80 complex, which is composed of Ndc80, Nuf2 and Spc25.

The protein localises to the nucleus. It localises to the chromosome. It is found in the centromere. Its subcellular location is the kinetochore. Functionally, acts as a component of the essential kinetochore-associated Ndc80 complex, which is required for chromosome segregation and spindle checkpoint activity during meiosis and mitosis. Required for kinetochore integrity and the organization of stable microtubule binding sites in the outer plate of the kinetochore. Participates in SAC signaling that responds specifically to disruptions in spindle microtubule dynamics. The NDC80 complex synergistically enhances the affinity of the SKA1 complex for microtubules and may allow the NDC80 complex to track depolymerizing microtubules. In Drosophila eugracilis (Fruit fly), this protein is Kinetochore protein Spc25.